A 247-amino-acid polypeptide reads, in one-letter code: Probable transcriptional regulatory protein HRM2_04000 (247 aa).

It belongs to the TACO1 family.

It localises to the cytoplasm. The chain is Probable transcriptional regulatory protein HRM2_04000 from Desulforapulum autotrophicum (strain ATCC 43914 / DSM 3382 / VKM B-1955 / HRM2) (Desulfobacterium autotrophicum).